Here is a 656-residue protein sequence, read N- to C-terminus: Pheromone-regulated membrane protein 2 (656 aa).

Transmembrane regions (helical) follow at residues 16 to 36, 320 to 340, 422 to 442, and 634 to 654; these read FFSC…ILTI, IIFT…ERIL, WIIS…LIHW, and WGLL…FIIL.

It is found in the membrane. This chain is Pheromone-regulated membrane protein 2 (PRM2), found in Saccharomyces cerevisiae (strain ATCC 204508 / S288c) (Baker's yeast).